A 362-amino-acid chain; its full sequence is Patr class I histocompatibility antigen, A-5 alpha chain (362 aa).

A signal peptide spans 1-24 (MQVTAPRTVLLLLSAALALTETWA). An alpha-1 region spans residues 25–114 (GSHSMKYFYT…LRGYYNQSEA (90 aa)). At 25–308 (GSHSMKYFYT…EPSSQSTIPI (284 aa)) the chain is on the extracellular side. N-linked (GlcNAc...) asparagine glycosylation is present at Asn110. The tract at residues 115 to 206 (GSHIIQRMYG…ENGKETLQRA (92 aa)) is alpha-2. Cystine bridges form between Cys125–Cys188 and Cys227–Cys283. Residues 207-298 (DPPKTHVTHH…GLPKPLTLRW (92 aa)) are alpha-3. Residues 209–295 (PKTHVTHHPI…QHEGLPKPLT (87 aa)) enclose the Ig-like C1-type domain. Residues 299–308 (EPSSQSTIPI) form a connecting peptide region. A helical membrane pass occupies residues 309–332 (VGIVAGLAVLAVVVIGAVVAAVMC). At 333 to 362 (RRKSSGGKGGSYSQAASSDSAQGSDVSLTA) the chain is on the cytoplasmic side. Residues 336-362 (SSGGKGGSYSQAASSDSAQGSDVSLTA) are disordered. Ser343 is modified (phosphoserine). Residues 343–362 (SYSQAASSDSAQGSDVSLTA) are compositionally biased toward low complexity. A Phosphotyrosine modification is found at Tyr344. 6 positions are modified to phosphoserine: Ser345, Ser349, Ser350, Ser352, Ser356, and Ser359.

Belongs to the MHC class I family. As to quaternary structure, heterodimer of an alpha chain and a beta chain (beta-2-microglobulin).

The protein resides in the membrane. Functionally, involved in the presentation of foreign antigens to the immune system. The protein is Patr class I histocompatibility antigen, A-5 alpha chain of Pan troglodytes (Chimpanzee).